Reading from the N-terminus, the 199-residue chain is Imidazole glycerol phosphate synthase subunit HisH (199 aa).

Positions 3-199 (NITIIDTGCA…LKNFVEKVPF (197 aa)) constitute a Glutamine amidotransferase type-1 domain. Cys78 functions as the Nucleophile in the catalytic mechanism. Residues His178 and Glu180 contribute to the active site.

In terms of assembly, heterodimer of HisH and HisF.

Its subcellular location is the cytoplasm. The enzyme catalyses 5-[(5-phospho-1-deoxy-D-ribulos-1-ylimino)methylamino]-1-(5-phospho-beta-D-ribosyl)imidazole-4-carboxamide + L-glutamine = D-erythro-1-(imidazol-4-yl)glycerol 3-phosphate + 5-amino-1-(5-phospho-beta-D-ribosyl)imidazole-4-carboxamide + L-glutamate + H(+). It carries out the reaction L-glutamine + H2O = L-glutamate + NH4(+). Its pathway is amino-acid biosynthesis; L-histidine biosynthesis; L-histidine from 5-phospho-alpha-D-ribose 1-diphosphate: step 5/9. IGPS catalyzes the conversion of PRFAR and glutamine to IGP, AICAR and glutamate. The HisH subunit catalyzes the hydrolysis of glutamine to glutamate and ammonia as part of the synthesis of IGP and AICAR. The resulting ammonia molecule is channeled to the active site of HisF. The protein is Imidazole glycerol phosphate synthase subunit HisH of Haemophilus influenzae (strain 86-028NP).